Consider the following 100-residue polypeptide: MDARSLLLLWLLLPLLLLLGCEVQGAHLTQQDEPTSPDLLETLSTYWDSAKAAAQGLYNNTYLPAVDETIRDIYSKGSAAISTYTGILTDQILTMLQGKQ.

The signal sequence occupies residues 1–25 (MDARSLLLLWLLLPLLLLLGCEVQG). The tract at residues 65 to 73 (AVDETIRDI) is lipid binding. Positions 77 to 100 (GSAAISTYTGILTDQILTMLQGKQ) are lipoprotein lipase cofactor.

This sequence belongs to the apolipoprotein C2 family. Proapolipoprotein C-II is synthesized as a sialic acid containing glycoprotein which is subsequently desialylated prior to its proteolytic processing. In terms of processing, proapolipoprotein C-II, the major form found in plasma undergoes proteolytic cleavage of its N-terminal hexapeptide to generate apolipoprotein C-II, which occurs as the minor form in plasma. In terms of tissue distribution, liver.

Its subcellular location is the secreted. Its function is as follows. Component of chylomicrons, very low-density lipoproteins (VLDL), low-density lipoproteins (LDL), and high-density lipoproteins (HDL) in plasma. Plays an important role in lipoprotein metabolism as an activator of lipoprotein lipase. Both proapolipoprotein C-II and apolipoprotein C-II can activate lipoprotein lipase. This Cavia porcellus (Guinea pig) protein is Apolipoprotein C-II (APOC2).